Consider the following 700-residue polypeptide: Ribonucleoside-diphosphate reductase subunit alpha (700 aa).

Substrate is bound by residues threonine 153, 169 to 170, glycine 198, 380 to 384, and 580 to 584; these read SC, NLCSE, and PTGSI. A disulfide bond links cysteine 170 and cysteine 409. Catalysis depends on asparagine 380, which acts as the Proton acceptor. Cysteine 382 (cysteine radical intermediate) is an active-site residue. Residue glutamate 384 is the Proton acceptor of the active site.

Belongs to the ribonucleoside diphosphate reductase large chain family. In terms of assembly, tetramer of two alpha and two beta subunits.

The enzyme catalyses a 2'-deoxyribonucleoside 5'-diphosphate + [thioredoxin]-disulfide + H2O = a ribonucleoside 5'-diphosphate + [thioredoxin]-dithiol. Under complex allosteric control mediated by deoxynucleoside triphosphates and ATP binding. The type of nucleotide bound at the specificity site determines substrate preference. It seems probable that ATP makes the enzyme reduce CDP and UDP, dGTP favors ADP reduction and dTTP favors GDP reduction. In terms of biological role, provides the precursors necessary for DNA synthesis. Catalyzes the biosynthesis of deoxyribonucleotides from the corresponding ribonucleotides. This chain is Ribonucleoside-diphosphate reductase subunit alpha, found in Bacillus subtilis (strain 168).